The primary structure comprises 217 residues: Elongation factor Ts (217 aa).

The segment at 82–85 (TDFV) is involved in Mg(2+) ion dislocation from EF-Tu.

It belongs to the EF-Ts family.

It is found in the cytoplasm. In terms of biological role, associates with the EF-Tu.GDP complex and induces the exchange of GDP to GTP. It remains bound to the aminoacyl-tRNA.EF-Tu.GTP complex up to the GTP hydrolysis stage on the ribosome. The protein is Elongation factor Ts of Prochlorococcus marinus (strain SARG / CCMP1375 / SS120).